A 160-amino-acid chain; its full sequence is Phosphopantetheine adenylyltransferase (160 aa).

Substrate is bound at residue Thr-10. ATP-binding positions include 10–11 (TF) and His-18. 3 residues coordinate substrate: Lys-42, Leu-74, and Arg-88. ATP contacts are provided by residues 89-91 (GLR), Glu-99, and 124-130 (NSFISST).

Belongs to the bacterial CoaD family. In terms of assembly, homohexamer. Requires Mg(2+) as cofactor.

Its subcellular location is the cytoplasm. The enzyme catalyses (R)-4'-phosphopantetheine + ATP + H(+) = 3'-dephospho-CoA + diphosphate. Its pathway is cofactor biosynthesis; coenzyme A biosynthesis; CoA from (R)-pantothenate: step 4/5. Reversibly transfers an adenylyl group from ATP to 4'-phosphopantetheine, yielding dephospho-CoA (dPCoA) and pyrophosphate. The sequence is that of Phosphopantetheine adenylyltransferase from Pseudoalteromonas atlantica (strain T6c / ATCC BAA-1087).